Here is a 249-residue protein sequence, read N- to C-terminus: Tetrahydromethanopterin S-methyltransferase subunit A (249 aa).

Residues 2–225 are Cytoplasmic-facing; sequence PEKAEPAEGW…YMAGYLSGRT (224 aa). A 5-hydroxybenzimidazolylcob(I)amide-binding site is contributed by His-88. The helical transmembrane segment at 226-246 threads the bilayer; the sequence is MGLLIGIISGMIFLFLPMVVL. The Extracellular portion of the chain corresponds to 247–249; sequence GGV.

This sequence belongs to the MtrA family. The complex is composed of 8 subunits; MtrA, MtrB, MtrC, MtrD, MtrE, MtrF, MtrG and MtrH. Requires 5-hydroxybenzimidazolylcob(I)amide as cofactor.

It localises to the cell membrane. It catalyses the reaction 5-methyl-5,6,7,8-tetrahydromethanopterin + coenzyme M + 2 Na(+)(in) = 5,6,7,8-tetrahydromethanopterin + methyl-coenzyme M + 2 Na(+)(out). It functions in the pathway one-carbon metabolism; methanogenesis from CO(2); methyl-coenzyme M from 5,10-methylene-5,6,7,8-tetrahydromethanopterin: step 2/2. In terms of biological role, part of a complex that catalyzes the formation of methyl-coenzyme M and tetrahydromethanopterin from coenzyme M and methyl-tetrahydromethanopterin. This is an energy-conserving, sodium-ion translocating step. The polypeptide is Tetrahydromethanopterin S-methyltransferase subunit A (Methanopyrus kandleri (strain AV19 / DSM 6324 / JCM 9639 / NBRC 100938)).